The primary structure comprises 309 residues: Taste receptor type 2 member 45 (309 aa).

Residue Met1 is a topological domain, extracellular. The chain crosses the membrane as a helical span at residues 2-22; that stretch reads ITFLPIIFSILVVVTFVIGNF. Residues 23-55 lie on the Cytoplasmic side of the membrane; that stretch reads ANGFIALVNSTEWVKRQKISFADQIVTALAVSR. A helical membrane pass occupies residues 56-76; sequence VGLLWVLLLNWYSTVLNPAFY. Topologically, residues 77–98 are extracellular; sequence SVELRTTAYNIWAVTGHFSNWL. Residues 99–119 traverse the membrane as a helical segment; that stretch reads ATSLSIFYLLKIANFSNLIFL. Residues 120-126 are Cytoplasmic-facing; sequence HLKRRVK. Residues 127 to 147 traverse the membrane as a helical segment; that stretch reads SVILVMLLGPLLFLACHLFVV. Residues 148 to 178 lie on the Extracellular side of the membrane; sequence NMNQIVWTKEYEGNMTWKIKLRRAMYLSDTT. Asn161 is a glycosylation site (N-linked (GlcNAc...) asparagine). The helical transmembrane segment at 179-199 threads the bilayer; sequence VTMLANLVPFTVTLISFLLLV. The Cytoplasmic portion of the chain corresponds to 200–229; it reads CSLCEHLKKMQLHGKGSQDPSTKVHIKALQ. Residues 230 to 250 traverse the membrane as a helical segment; the sequence is TVISFLLLCAIYFVSVIISVW. Residues 251 to 259 lie on the Extracellular side of the membrane; that stretch reads SFKNLENKP. Residues 260–280 traverse the membrane as a helical segment; the sequence is VFMFCQAIGFSCSSAHPFILI. Residues 281–309 lie on the Cytoplasmic side of the membrane; that stretch reads WGNKKLKQPFLSVLWQMRYWVKGEKPSSS.

This sequence belongs to the G-protein coupled receptor T2R family.

Its subcellular location is the membrane. Its function is as follows. Receptor that may play a role in the perception of bitterness and is gustducin-linked. May play a role in sensing the chemical composition of the gastrointestinal content. The activity of this receptor may stimulate alpha gustducin, mediate PLC-beta-2 activation and lead to the gating of TRPM5. In Pan paniscus (Pygmy chimpanzee), this protein is Taste receptor type 2 member 45 (TAS2R45).